The sequence spans 134 residues: Large-conductance mechanosensitive channel (134 aa).

2 helical membrane passes run 16-36 and 81-101; these read VIDLAVAVVIGAAFGKIVTAL and GDFLNTILQFIIIAFAIFIIV.

It belongs to the MscL family. Homopentamer.

The protein resides in the cell inner membrane. Channel that opens in response to stretch forces in the membrane lipid bilayer. May participate in the regulation of osmotic pressure changes within the cell. This Xylella fastidiosa (strain 9a5c) protein is Large-conductance mechanosensitive channel.